Reading from the N-terminus, the 211-residue chain is Protein-L-isoaspartate O-methyltransferase (211 aa).

The active site involves serine 60.

It belongs to the methyltransferase superfamily. L-isoaspartyl/D-aspartyl protein methyltransferase family.

The protein resides in the cytoplasm. The catalysed reaction is [protein]-L-isoaspartate + S-adenosyl-L-methionine = [protein]-L-isoaspartate alpha-methyl ester + S-adenosyl-L-homocysteine. Functionally, catalyzes the methyl esterification of L-isoaspartyl residues in peptides and proteins that result from spontaneous decomposition of normal L-aspartyl and L-asparaginyl residues. It plays a role in the repair and/or degradation of damaged proteins. The protein is Protein-L-isoaspartate O-methyltransferase of Pseudomonas aeruginosa (strain LESB58).